The chain runs to 507 residues: ATP synthase subunit alpha, chloroplastic (507 aa).

An ATP-binding site is contributed by 170–177; sequence IGDRQTGK.

This sequence belongs to the ATPase alpha/beta chains family. F-type ATPases have 2 components, CF(1) - the catalytic core - and CF(0) - the membrane proton channel. CF(1) has five subunits: alpha(3), beta(3), gamma(1), delta(1), epsilon(1). CF(0) has four main subunits: a, b, b' and c.

The protein resides in the plastid. It is found in the chloroplast thylakoid membrane. The enzyme catalyses ATP + H2O + 4 H(+)(in) = ADP + phosphate + 5 H(+)(out). In terms of biological role, produces ATP from ADP in the presence of a proton gradient across the membrane. The alpha chain is a regulatory subunit. This Adiantum capillus-veneris (Maidenhair fern) protein is ATP synthase subunit alpha, chloroplastic.